Here is a 338-residue protein sequence, read N- to C-terminus: Holliday junction branch migration complex subunit RuvB (338 aa).

Residues 1 to 179 (MTDLTTPIRT…FGIPVRLNFY (179 aa)) form a large ATPase domain (RuvB-L) region. Leu-18, Arg-19, Gly-60, Lys-63, Thr-64, Thr-65, Arg-169, Tyr-179, and Arg-216 together coordinate ATP. Mg(2+) is bound at residue Thr-64. Positions 180–250 (THAELEQVIG…AADAALNRLE (71 aa)) are small ATPAse domain (RuvB-S). The segment at 253-338 (ALGLDAMDRR…AGSQDGLFDK (86 aa)) is head domain (RuvB-H). The DNA site is built by Arg-289, Arg-308, and Arg-313.

Belongs to the RuvB family. In terms of assembly, homohexamer. Forms an RuvA(8)-RuvB(12)-Holliday junction (HJ) complex. HJ DNA is sandwiched between 2 RuvA tetramers; dsDNA enters through RuvA and exits via RuvB. An RuvB hexamer assembles on each DNA strand where it exits the tetramer. Each RuvB hexamer is contacted by two RuvA subunits (via domain III) on 2 adjacent RuvB subunits; this complex drives branch migration. In the full resolvosome a probable DNA-RuvA(4)-RuvB(12)-RuvC(2) complex forms which resolves the HJ.

The protein localises to the cytoplasm. The catalysed reaction is ATP + H2O = ADP + phosphate + H(+). In terms of biological role, the RuvA-RuvB-RuvC complex processes Holliday junction (HJ) DNA during genetic recombination and DNA repair, while the RuvA-RuvB complex plays an important role in the rescue of blocked DNA replication forks via replication fork reversal (RFR). RuvA specifically binds to HJ cruciform DNA, conferring on it an open structure. The RuvB hexamer acts as an ATP-dependent pump, pulling dsDNA into and through the RuvAB complex. RuvB forms 2 homohexamers on either side of HJ DNA bound by 1 or 2 RuvA tetramers; 4 subunits per hexamer contact DNA at a time. Coordinated motions by a converter formed by DNA-disengaged RuvB subunits stimulates ATP hydrolysis and nucleotide exchange. Immobilization of the converter enables RuvB to convert the ATP-contained energy into a lever motion, pulling 2 nucleotides of DNA out of the RuvA tetramer per ATP hydrolyzed, thus driving DNA branch migration. The RuvB motors rotate together with the DNA substrate, which together with the progressing nucleotide cycle form the mechanistic basis for DNA recombination by continuous HJ branch migration. Branch migration allows RuvC to scan DNA until it finds its consensus sequence, where it cleaves and resolves cruciform DNA. The protein is Holliday junction branch migration complex subunit RuvB of Sphingopyxis alaskensis (strain DSM 13593 / LMG 18877 / RB2256) (Sphingomonas alaskensis).